A 254-amino-acid chain; its full sequence is uncharacterized protein (254 aa).

The tract at residues 60-161 (PKSPTTTSIS…PEIPQAAPGT (102 aa)) is disordered. Low complexity-rich tracts occupy residues 63–77 (PTTT…STTP) and 89–146 (TPIP…TTTS).

This is an uncharacterized protein from Caenorhabditis elegans.